A 711-amino-acid polypeptide reads, in one-letter code: Serine/threonine-protein kinase ATG1b (711 aa).

One can recognise a Protein kinase domain in the interval 20-277 (YAVGRQIGSG…FEEFFHHPFL (258 aa)). ATP-binding positions include 26-34 (IGSGSFSVV) and Lys-49. Asp-142 (proton acceptor) is an active-site residue. Disordered stretches follow at residues 318–342 (LPFF…TSPM) and 383–419 (FEGH…SMDQ). Positions 383–393 (FEGHRLSDRSQ) are enriched in basic and acidic residues. Positions 394–410 (FKPSSLPDSRSFSTQGR) are enriched in polar residues. The AIM (Atg8-family-interacting motif) signature appears at 421-424 (YVLI).

The protein belongs to the protein kinase superfamily. Ser/Thr protein kinase family.

It is found in the cytoplasmic vesicle. Its subcellular location is the autophagosome. In terms of biological role, serine/threonine protein kinase involved in autophagy. The ATG1-ATG13 protein kinase complex regulates downstream events required for autophagosome enclosure and/or vacuolar delivery. The chain is Serine/threonine-protein kinase ATG1b from Arabidopsis thaliana (Mouse-ear cress).